Here is a 183-residue protein sequence, read N- to C-terminus: ATP-dependent protease subunit HslV (183 aa).

T13 is a catalytic residue. Na(+) is bound by residues G168, C171, and T174.

It belongs to the peptidase T1B family. HslV subfamily. As to quaternary structure, a double ring-shaped homohexamer of HslV is capped on each side by a ring-shaped HslU homohexamer. The assembly of the HslU/HslV complex is dependent on binding of ATP.

It is found in the cytoplasm. The catalysed reaction is ATP-dependent cleavage of peptide bonds with broad specificity.. Its activity is regulated as follows. Allosterically activated by HslU binding. In terms of biological role, protease subunit of a proteasome-like degradation complex believed to be a general protein degrading machinery. The protein is ATP-dependent protease subunit HslV of Xanthomonas oryzae pv. oryzae (strain MAFF 311018).